We begin with the raw amino-acid sequence, 476 residues long: MEKRLRLAPSPTGLFHIGTARTALFNWLYAQKIGGKFLIRIEDTDFLRSKSEYTKNILQGLKWLGLKWDEEPIKQSDRISIHKSHIKKLLECGAAYRCFTSEDEISELREEQKKKGLPPKHDNRHRSLSKEEIETFISQGRTSVIRFKIDEKIVIKWIDQIRGEIKWQGKDLGGDLVLSRRAKGYEIGDPLYNLAVVVDDNFMNITHVVRGEDHISNTAKQILIYNALNFNLPTFSHTPLILNSEGKKLSKRDCVTSIDEFREMGYLPEALSNYMAFLGWSPKTADREILSLEEISEIFDLSEINKAGAKFSWEKLNWINSQYIKNMESIKLVEIMRTYWDENGWEPPSQEWANKLAILIRDSMTLLKDSIDQSKPFFLIPTIQKEGQDFLENRESKLSLKLILNYLIEKNTIKLNKEKAKEIINEISKKHNIKKGILMKSLRVAFFGSLIGPDLIQSWELFAESKTDRTRIERCL.

A 'HIGH' region motif is present at residues 9-19 (PSPTGLFHIGT). Positions 248–252 (KLSKR) match the 'KMSKS' region motif. K251 is a binding site for ATP.

It belongs to the class-I aminoacyl-tRNA synthetase family. Glutamate--tRNA ligase type 1 subfamily. In terms of assembly, monomer.

It is found in the cytoplasm. It carries out the reaction tRNA(Glu) + L-glutamate + ATP = L-glutamyl-tRNA(Glu) + AMP + diphosphate. Its function is as follows. Catalyzes the attachment of glutamate to tRNA(Glu) in a two-step reaction: glutamate is first activated by ATP to form Glu-AMP and then transferred to the acceptor end of tRNA(Glu). This Prochlorococcus marinus (strain AS9601) protein is Glutamate--tRNA ligase.